The sequence spans 833 residues: MSFYNHKEIEPKWQGYWAEHHTFKTGTDASKPKFYALDMFPYPSGAGLHVGHPEGYTATDILSRYKRAQGYNVLHPMGWDAFGLPAEQYAMDTGNDPAEFTAENIANFKRQINALGFSYDWDREVNTTDPNYYKWTQWIFTKLYEKGLAYEAEVPVNWVEELGTAIANEEVLPDGTSERGGYPVVRKPMRQWMLKITAYAERLLNDLDELDWSESIKDMQRNWIGKSTGANVTFKVKGTDKEFTVFTTRPDTLFGATFTVLAPEHELVDAITSSEQAEAVADYKHQASLKSDLVRTDLAKEKTGVWTGAYAINPVNGKEMPIWIADYVLASYGTGAVMAVPAHDQRDWEFAKQFDLPIVEVLEGGNVEEAAYTEDGLHVNSDFLDGLNKEDAIAKIVACLEEKGCGQEKVTYRLRDWLFSRQRYWGEPIPIIHWEDGTSTAVPETELPLVLPVTKDIRPSGTGESPLANLTDWLEVTREDGVKGRRETNTMPQWAGSSWYYLRYIDPHNTEKLADEDLLKQWLPVDIYVGGAEHAVLHLLYARFWHKFLYDLGVVPTKEPFQKLFNQGMILGTSYRDHRGALVATDKVEKRDGSFFHIETGEELEQAPAKMSKSLKNVVNPDDVVEQYGADTLRVYEMFMGPLDASIAWSEEGLEGSRKFLDRVYRLITSKEILAENNGALDKAYNETVKAVTEQIESLKFNTAIAQLMVFVNAANKEDKLYVDYAKGFIQLIAPFAPHLAEELWQTVAETGESISYVAWPTWDESKLVEDEIEIVVQIKGKVRAKLMVAKDLSREELQEIALADEKVKAEIDGKEIVKVISVPNKLVNIVVK.

Residues 41 to 52 carry the 'HIGH' region motif; that stretch reads PYPSGAGLHVGH. The 'KMSKS' region motif lies at 610–614; the sequence is KMSKS. ATP is bound at residue Lys613.

It belongs to the class-I aminoacyl-tRNA synthetase family.

The protein localises to the cytoplasm. It catalyses the reaction tRNA(Leu) + L-leucine + ATP = L-leucyl-tRNA(Leu) + AMP + diphosphate. The polypeptide is Leucine--tRNA ligase (Streptococcus pneumoniae (strain ATCC 700669 / Spain 23F-1)).